We begin with the raw amino-acid sequence, 1143 residues long: Disease resistance protein Pik-1 (1143 aa).

The interval 1–190 is structured coiled coil (CC) domain; sequence MEAAAMAVTA…PLRIMGGEMQ (190 aa). The region spanning 189 to 258 is the HMA domain; that stretch reads MQKIVFKIPM…KVGHAELLQV (70 aa). The tract at residues 191–264 is HMA-like domain; it reads KIVFKIPMVD…LLQVSQVKED (74 aa). The region spanning 282 to 570 is the NB-ARC domain; the sequence is HEVKTICILG…WIAEGFVSEE (289 aa). LRR repeat units lie at residues 681 to 706, 708 to 731, 732 to 754, 756 to 777, 778 to 800, 802 to 823, 824 to 848, 945 to 968, 979 to 1002, and 1004 to 1027; these read FKRLRVLDLEDNKDIQDSHLQGICEQ, SLRVRYLGLKGTRIRKLPQEMRKL, KHLEILYVGSTRISELPQEIGEL, HLRILDVRNTDITELPLQIREL, QHLHTLDVRNTPISELPPQVGKL, NLKIMCVRSTGVRELPKEIGEL, NHLQTLDVRNTRVRELPWQAGQISQ, MPNLQTLVLRFEALPRQPITINGT, DSRLPRIAFHEDAMPNLKLLEFKF, and AGPASNDAIGITNLKSLQKVVFRC.

This sequence belongs to the disease resistance NB-LRR family. As to quaternary structure, interacts with AVR-Pik through its N-terminal part containing the HMA-like domain.

Disease resistance (R) protein that specifically recognizes the AVR-Pik effector avirulence protein from M.oryzae. Resistance proteins guard the plant against pathogens that contain an appropriate avirulence protein via an indirect interaction with this avirulence protein. That triggers a defense system including the hypersensitive response, which restricts the pathogen growth. Contribution of Pik-2 is required to recognize the effector avirulence protein AVR-Pik. This Oryza sativa subsp. japonica (Rice) protein is Disease resistance protein Pik-1.